Consider the following 265-residue polypeptide: Protein IL-40 (265 aa).

The N-terminal stretch at 1–20 (MGLPGLFCLAVLAASSFSKA) is a signal peptide. N86 and N132 each carry an N-linked (GlcNAc...) asparagine glycan.

Expressed in fetal liver and bone marrow. Expressed in peripheral blood lymphocyte B cells.

The protein resides in the secreted. In terms of biological role, probable B cell-associated cytokine that plays a role in the regulation of humoral immune responses. Involved in lymphocyte B cell development and immunoglobulin/IgA production. The protein is Protein IL-40 of Homo sapiens (Human).